The sequence spans 171 residues: Shikimate kinase (171 aa).

14–19 (GAGKST) is an ATP binding site. Mg(2+) is bound at residue Ser-18. Substrate-binding residues include Asp-36, Arg-60, and Gly-82. Position 120 (Arg-120) interacts with ATP. Arg-139 contributes to the substrate binding site. Gln-156 serves as a coordination point for ATP.

The protein belongs to the shikimate kinase family. As to quaternary structure, monomer. Mg(2+) serves as cofactor.

The protein resides in the cytoplasm. It catalyses the reaction shikimate + ATP = 3-phosphoshikimate + ADP + H(+). It participates in metabolic intermediate biosynthesis; chorismate biosynthesis; chorismate from D-erythrose 4-phosphate and phosphoenolpyruvate: step 5/7. Its function is as follows. Catalyzes the specific phosphorylation of the 3-hydroxyl group of shikimic acid using ATP as a cosubstrate. This Shewanella oneidensis (strain ATCC 700550 / JCM 31522 / CIP 106686 / LMG 19005 / NCIMB 14063 / MR-1) protein is Shikimate kinase.